The primary structure comprises 167 residues: MPRSQRNDNFIDKTFTVVADILLKILPTTGREKEAFAYYRDGMSAQAEGEYAEALQNYYEAMRLEVDAYDRSYILYNIGLIHTSNGEHAKALEYYYQAIERNPSLPQALNNIAVIYHYRGEQAIEEGNSEAAEILFDQAASYWKQAIRLAPTSYIEAQNWLKLTGRI.

TPR repeat units follow at residues 35–68 (AFAYYRDGMSAQAEGEYAEALQNYYEAMRLEVDA), 72–105 (SYILYNIGLIHTSNGEHAKALEYYYQAIERNPSL), and 120–153 (GEQAIEEGNSEAAEILFDQAASYWKQAIRLAPTS).

It belongs to the Ycf3 family.

Its subcellular location is the plastid. It localises to the chloroplast thylakoid membrane. Its function is as follows. Essential for the assembly of the photosystem I (PSI) complex. May act as a chaperone-like factor to guide the assembly of the PSI subunits. This chain is Photosystem I assembly protein Ycf3, found in Chlorokybus atmophyticus (Soil alga).